The chain runs to 295 residues: Alpha-ketoglutarate-dependent sulfate ester dioxygenase (295 aa).

Histidine 71 provides a ligand contact to substrate. Residues histidine 98 and aspartate 100 each contribute to the Fe cation site. Position 101 (valine 101) interacts with substrate. Threonine 125 provides a ligand contact to 2-oxoglutarate. Histidine 252 is a Fe cation binding site. Arginine 263 and arginine 267 together coordinate 2-oxoglutarate.

Belongs to the TfdA dioxygenase family. Requires Fe(2+) as cofactor.

The catalysed reaction is a primary linear alkyl sulfate ester + 2-oxoglutarate + O2 = an aldehyde + sulfate + succinate + CO2 + H(+). It carries out the reaction 2-ethylhexyl sulfate + 2-oxoglutarate + O2 = 2-ethylhexanal + sulfate + succinate + CO2 + H(+). It catalyses the reaction hexyl sulfate + 2-oxoglutarate + O2 = hexanal + sulfate + succinate + CO2 + H(+). The enzyme catalyses pentyl sulfate + 2-oxoglutarate + O2 = pentanal + sulfate + succinate + CO2 + H(+). The catalysed reaction is heptyl sulfate + 2-oxoglutarate + O2 = heptanal + sulfate + succinate + CO2 + H(+). In terms of biological role, alpha-ketoglutarate-dependent sulfate ester dioxygenase, which oxidizes medium-chain alkyl-sulfate esters. Shows preference for 2-ethylhexyl sulfate (2-EHS) in vitro, leading to the formation of succinate and 2-ethylhexanal. Has likely a role in sulfate scavenging in vivo. Also causes the inactivation of the 2-carboxyquinoxaline Ty38c (an antitubercular compound that inhibits DprE1) via oxidative decarboxylation, using Ty38c instead of alpha-ketoglutarate as a substrate. Is thus responsible for primary resistance of M.tuberculosis to Ty38c in vitro. Overexpression of Rv3406 causes resistance to Ty38c. This is Alpha-ketoglutarate-dependent sulfate ester dioxygenase from Mycobacterium tuberculosis (strain ATCC 25618 / H37Rv).